Here is a 433-residue protein sequence, read N- to C-terminus: 26S proteasome regulatory subunit 7 (433 aa).

A disordered region spans residues 1 to 22 (MPDYLGADQRKTKEDEKDDKPI). Over residues 8–22 (DQRKTKEDEKDDKPI) the composition is skewed to basic and acidic residues. Position 116 is an N6-acetyllysine (lysine 116). An ATP-binding site is contributed by 216-223 (GPPGTGKT). At lysine 422 the chain carries N6-acetyllysine.

It belongs to the AAA ATPase family. In terms of assembly, component of the 19S proteasome regulatory particle complex. The 26S proteasome consists of a 20S core particle (CP) and two 19S regulatory subunits (RP). The regulatory particle is made of a lid composed of 9 subunits, a base containing 6 ATPases including PSMC2 and few additional components. Interacts with NDC80/HEC; this interaction is detected only during M phase. Interacts and SQSTM1. Interacts with PAAF1. Directly interacts with TRIM5. In terms of processing, monoubiquitinated by RNF181. Post-translationally, phosphorylated. Dephosphorylated by UBLCP1 which impairs PSMC2 ATPase activity and disrupts 26S proteasome assembly.

Its subcellular location is the cytoplasm. It localises to the nucleus. Component of the 26S proteasome, a multiprotein complex involved in the ATP-dependent degradation of ubiquitinated proteins. This complex plays a key role in the maintenance of protein homeostasis by removing misfolded or damaged proteins, which could impair cellular functions, and by removing proteins whose functions are no longer required. Therefore, the proteasome participates in numerous cellular processes, including cell cycle progression, apoptosis, or DNA damage repair. PSMC2 belongs to the heterohexameric ring of AAA (ATPases associated with diverse cellular activities) proteins that unfolds ubiquitinated target proteins that are concurrently translocated into a proteolytic chamber and degraded into peptides. The protein is 26S proteasome regulatory subunit 7 (PSMC2) of Bos taurus (Bovine).